We begin with the raw amino-acid sequence, 208 residues long: Uracil phosphoribosyltransferase (208 aa).

5-phospho-alpha-D-ribose 1-diphosphate-binding positions include arginine 78, arginine 103, and 130 to 138; that span reads DPMLATGGS. Uracil is bound by residues isoleucine 193 and 198–200; that span reads GDA. Aspartate 199 is a 5-phospho-alpha-D-ribose 1-diphosphate binding site.

The protein belongs to the UPRTase family. Requires Mg(2+) as cofactor.

The enzyme catalyses UMP + diphosphate = 5-phospho-alpha-D-ribose 1-diphosphate + uracil. The protein operates within pyrimidine metabolism; UMP biosynthesis via salvage pathway; UMP from uracil: step 1/1. Allosterically activated by GTP. In terms of biological role, catalyzes the conversion of uracil and 5-phospho-alpha-D-ribose 1-diphosphate (PRPP) to UMP and diphosphate. In Klebsiella pneumoniae subsp. pneumoniae (strain ATCC 700721 / MGH 78578), this protein is Uracil phosphoribosyltransferase.